The sequence spans 757 residues: Endonuclease MutS2 (757 aa).

321–328 (GPNMGGKT) is a binding site for ATP. Positions 681-756 (IDIRGMTVEE…GTGVTVVEVE (76 aa)) constitute a Smr domain.

It belongs to the DNA mismatch repair MutS family. MutS2 subfamily. In terms of assembly, homodimer. Binds to stalled ribosomes, contacting rRNA.

In terms of biological role, endonuclease that is involved in the suppression of homologous recombination and thus may have a key role in the control of bacterial genetic diversity. Acts as a ribosome collision sensor, splitting the ribosome into its 2 subunits. Detects stalled/collided 70S ribosomes which it binds and splits by an ATP-hydrolysis driven conformational change. Acts upstream of the ribosome quality control system (RQC), a ribosome-associated complex that mediates the extraction of incompletely synthesized nascent chains from stalled ribosomes and their subsequent degradation. Probably generates substrates for RQC. This is Endonuclease MutS2 from Thermotoga neapolitana (strain ATCC 49049 / DSM 4359 / NBRC 107923 / NS-E).